The chain runs to 485 residues: Vacuolar fusion protein CCZ1 homolog (485 aa).

The protein belongs to the CCZ1 family. As to quaternary structure, component of the Mon1-Ccz1 guanyl-nucleotide exchange factor complex made up of Mon1, Ccz1 and Bulli; the interaction of Bulli with the Mon1-Ccz1 heterodimer is mediated via the C-terminal Mic1 domain of Bulli. Mon1 and Ccz1 form a stable complex which displays Rab7 GEF activity with or without Bulli; GEF activity is enhanced by Bulli possibly by improving membrane association of the complex. Interacts with Rab5 and Rab7; preferentially binds GTP-bound Rab5 and GDP-bound Rab7.

It is found in the cytoplasm. The protein localises to the cytosol. Its activity is regulated as follows. The Rab7 guanyl-nucleotide exchange factor (GEF) activity of the Mon1-Ccz1 complex is autoinhibited by the N-terminal disordered region of Mon1. GEF activity is stimulated by Rab5-mediated recruitment to membranes. Part of the Mon1-Ccz1 guanyl-nucleotide exchange factor complex specific for Rab7 that promotes the exchange of GDP to GTP, converting Rab7 from an inactive GDP-bound form into an active GTP-bound form. Required for recruitment of Rab7 to endosomal and autophagosomal membranes to mediate endolysosomal and autolysosomal vesicle maturation. Required for fusion of multivesicular bodies and lysosomes but not their formation or trafficking. Involved in the replacement of Rab5 (and possibly Rab4) with Rab7, also known as Rab conversion or the Rab cascade, during endosomal maturation. The Mon1-Ccz1 complex is recruited to phosphatidylinositol 3-phosphate (PtdIns[3]P) enriched membranes by Rab5, which stimulates recruitment and guanyl-nucleotide exchange of Rab7. Together with Rab7 required for autolysosome formation in fat cells and autophagic degradation during starvation-induced basal and developmental autophagy. The sequence is that of Vacuolar fusion protein CCZ1 homolog from Drosophila melanogaster (Fruit fly).